The sequence spans 490 residues: MTSKSSPLIFERSREGRYAYSLPISDIKTNSVESLLDDKFIRKNKAEFPEVAELDLVRHYTELSNKNFGVDNGFYPLGSCTMKYNPKINEKVARIPGFSESHPLQDEDQVQGSLEIIYSLQEELKEITGMDEVTLQPAAGAHGEWTALMIFKAYHENNGEGHRDEVIVPDSAHGTNPASASFAGFKSVTVKSNERGEVDIDDLKRVVNENTAAIMLTNPNTLGIFEKNIMEIREIVHNAGGLLYYDGANLNAIMDKVRPGDMGFDAVHLNLHKTFTGPHGGGGPGSGPVGVVKELASYLPKPMVIKDGDTFKYDNDIKNSIGRVKPFYGNFGIYLRAYTYIRTMGATGLKEVSEVAVLNANYIKARLSEHFEIPYKQYCKHEFVLSGVRQKEFGVRTLDMAKRLLDFGVHPPTIYFPLNVEEGMMIEPTETESKETLDYFIDTLISIAEEAKNDPDKVLEAPHTTVIDRLDEATAARKPILKFENLKQEK.

K273 carries the N6-(pyridoxal phosphate)lysine modification.

Belongs to the GcvP family. C-terminal subunit subfamily. The glycine cleavage system is composed of four proteins: P, T, L and H. In this organism, the P 'protein' is a heterodimer of two subunits. Requires pyridoxal 5'-phosphate as cofactor.

It catalyses the reaction N(6)-[(R)-lipoyl]-L-lysyl-[glycine-cleavage complex H protein] + glycine + H(+) = N(6)-[(R)-S(8)-aminomethyldihydrolipoyl]-L-lysyl-[glycine-cleavage complex H protein] + CO2. The glycine cleavage system catalyzes the degradation of glycine. The P protein binds the alpha-amino group of glycine through its pyridoxal phosphate cofactor; CO(2) is released and the remaining methylamine moiety is then transferred to the lipoamide cofactor of the H protein. The sequence is that of Probable glycine dehydrogenase (decarboxylating) subunit 2 from Staphylococcus aureus (strain bovine RF122 / ET3-1).